The following is a 431-amino-acid chain: 4-hydroxy-3-methylbut-2-en-1-yl diphosphate synthase (flavodoxin) (431 aa).

The segment at 1 to 21 is disordered; it reads MNKLENPSQRDVAGPSPRHKT. The [4Fe-4S] cluster site is built by cysteine 310, cysteine 313, cysteine 356, and glutamate 363.

This sequence belongs to the IspG family. Requires [4Fe-4S] cluster as cofactor.

It catalyses the reaction (2E)-4-hydroxy-3-methylbut-2-enyl diphosphate + oxidized [flavodoxin] + H2O + 2 H(+) = 2-C-methyl-D-erythritol 2,4-cyclic diphosphate + reduced [flavodoxin]. It participates in isoprenoid biosynthesis; isopentenyl diphosphate biosynthesis via DXP pathway; isopentenyl diphosphate from 1-deoxy-D-xylulose 5-phosphate: step 5/6. Its function is as follows. Converts 2C-methyl-D-erythritol 2,4-cyclodiphosphate (ME-2,4cPP) into 1-hydroxy-2-methyl-2-(E)-butenyl 4-diphosphate. The sequence is that of 4-hydroxy-3-methylbut-2-en-1-yl diphosphate synthase (flavodoxin) from Nitrobacter hamburgensis (strain DSM 10229 / NCIMB 13809 / X14).